A 480-amino-acid polypeptide reads, in one-letter code: Aspartyl/glutamyl-tRNA(Asn/Gln) amidotransferase subunit B (480 aa).

This sequence belongs to the GatB/GatE family. GatB subfamily. In terms of assembly, heterotrimer of A, B and C subunits.

It catalyses the reaction L-glutamyl-tRNA(Gln) + L-glutamine + ATP + H2O = L-glutaminyl-tRNA(Gln) + L-glutamate + ADP + phosphate + H(+). The catalysed reaction is L-aspartyl-tRNA(Asn) + L-glutamine + ATP + H2O = L-asparaginyl-tRNA(Asn) + L-glutamate + ADP + phosphate + 2 H(+). Functionally, allows the formation of correctly charged Asn-tRNA(Asn) or Gln-tRNA(Gln) through the transamidation of misacylated Asp-tRNA(Asn) or Glu-tRNA(Gln) in organisms which lack either or both of asparaginyl-tRNA or glutaminyl-tRNA synthetases. The reaction takes place in the presence of glutamine and ATP through an activated phospho-Asp-tRNA(Asn) or phospho-Glu-tRNA(Gln). The protein is Aspartyl/glutamyl-tRNA(Asn/Gln) amidotransferase subunit B of Streptococcus thermophilus (strain ATCC BAA-250 / LMG 18311).